The primary structure comprises 189 residues: Protein GrpE (189 aa).

The span at 1 to 20 (MSDQQHSAPQNAAATASPSD) shows a compositional bias: polar residues. Positions 1-29 (MSDQQHSAPQNAAATASPSDSPEAVEATM) are disordered.

This sequence belongs to the GrpE family. In terms of assembly, homodimer.

It localises to the cytoplasm. Participates actively in the response to hyperosmotic and heat shock by preventing the aggregation of stress-denatured proteins, in association with DnaK and GrpE. It is the nucleotide exchange factor for DnaK and may function as a thermosensor. Unfolded proteins bind initially to DnaJ; upon interaction with the DnaJ-bound protein, DnaK hydrolyzes its bound ATP, resulting in the formation of a stable complex. GrpE releases ADP from DnaK; ATP binding to DnaK triggers the release of the substrate protein, thus completing the reaction cycle. Several rounds of ATP-dependent interactions between DnaJ, DnaK and GrpE are required for fully efficient folding. The chain is Protein GrpE from Paracidovorax citrulli (strain AAC00-1) (Acidovorax citrulli).